Reading from the N-terminus, the 743-residue chain is Type VI secretion system spike protein VgrG1 (743 aa).

It belongs to the VgrG protein family.

The protein localises to the secreted. It catalyses the reaction L-arginyl-[protein] + NAD(+) = N(omega)-(ADP-D-ribosyl)-L-arginyl-[protein] + nicotinamide + H(+). Part of the type VI secretion system specialized secretion system, which delivers several virulence factors in both prokaryotic and eukaryotic cells during infection. Acts directly as an secreted effector with an actin ADP-ribosyltransferase activity that disrupts the host actin cytoskeleton, leading to a decrease in host cell viability and an increase in apoptosis. The chain is Type VI secretion system spike protein VgrG1 (vgrG1) from Aeromonas hydrophila subsp. hydrophila (strain ATCC 7966 / DSM 30187 / BCRC 13018 / CCUG 14551 / JCM 1027 / KCTC 2358 / NCIMB 9240 / NCTC 8049).